A 225-amino-acid chain; its full sequence is UPF0758 protein Sputw3181_0338 (225 aa).

The 123-residue stretch at 102–224 (VLTNPDLTRD…IVSFAERGWI (123 aa)) folds into the MPN domain. Positions 173, 175, and 186 each coordinate Zn(2+). The JAMM motif motif lies at 173–186 (HNHPSGIAEPSQAD).

It belongs to the UPF0758 family.

This Shewanella sp. (strain W3-18-1) protein is UPF0758 protein Sputw3181_0338.